A 561-amino-acid polypeptide reads, in one-letter code: DNA ligase B (561 aa).

The active-site N6-AMP-lysine intermediate is K125.

This sequence belongs to the NAD-dependent DNA ligase family. LigB subfamily.

It carries out the reaction NAD(+) + (deoxyribonucleotide)n-3'-hydroxyl + 5'-phospho-(deoxyribonucleotide)m = (deoxyribonucleotide)n+m + AMP + beta-nicotinamide D-nucleotide.. Catalyzes the formation of phosphodiester linkages between 5'-phosphoryl and 3'-hydroxyl groups in double-stranded DNA using NAD as a coenzyme and as the energy source for the reaction. This is DNA ligase B from Salmonella schwarzengrund (strain CVM19633).